Here is a 238-residue protein sequence, read N- to C-terminus: 3-dehydroquinate dehydratase (238 aa).

Residues 35-37 and arginine 70 each bind 3-dehydroquinate; that span reads ELR. The Proton donor/acceptor role is filled by histidine 133. Lysine 160 acts as the Schiff-base intermediate with substrate in catalysis. The 3-dehydroquinate site is built by arginine 202 and glutamine 225.

Belongs to the type-I 3-dehydroquinase family. As to quaternary structure, homodimer.

It catalyses the reaction 3-dehydroquinate = 3-dehydroshikimate + H2O. The protein operates within metabolic intermediate biosynthesis; chorismate biosynthesis; chorismate from D-erythrose 4-phosphate and phosphoenolpyruvate: step 3/7. Its function is as follows. Involved in the third step of the chorismate pathway, which leads to the biosynthesis of aromatic amino acids. Catalyzes the cis-dehydration of 3-dehydroquinate (DHQ) and introduces the first double bond of the aromatic ring to yield 3-dehydroshikimate. This is 3-dehydroquinate dehydratase from Staphylococcus aureus (strain MRSA252).